Consider the following 1104-residue polypeptide: Transient receptor potential cation channel subfamily M member 8 (1104 aa).

The disordered stretch occupies residues 1–22 (MSFEGARLSMRSRRNGTMGSTR). At 1-733 (MSFEGARLSM…LWYYVAFFTS (733 aa)) the chain is on the cytoplasmic side. A helical transmembrane segment spans residues 734–758 (PFVVFSWNVVFYIAFLLLFAYVLLM). Topologically, residues 759–765 (DFHSVPH) are extracellular. The helical transmembrane segment at 766-789 (TPELILYALVFVLFCDEVRQWYMN) threads the bilayer. The Ca(2+) site is built by glutamate 782 and glutamine 785. Topologically, residues 790 to 796 (GVNYFTD) are cytoplasmic. Residues 797-817 (LWNVMDTLGLFYFIAGIVFRL) traverse the membrane as a helical segment. Ca(2+)-binding residues include asparagine 799 and aspartate 802. Residues 818-822 (HSSNK) lie on the Extracellular side of the membrane. A helical transmembrane segment spans residues 823-848 (SSLYSGRVIFCLDYIIFTLRLIHIFT). Residues 849–853 (VSRNL) lie on the Cytoplasmic side of the membrane. The helical transmembrane segment at 854-890 (GPKIIMLQRMLIDVFFFLFLFAVWMVAFGVARQGILR) threads the bilayer. The Extracellular portion of the chain corresponds to 891–895 (QNEQR). An intramembrane region (pore-forming) is located at residues 896 to 912 (WRWIFRSVIYEPYLAMF). At 913–953 (GQVPSDVDSTTYDFSHCTFSGNESKPLCVELDEHNLPRFPE) the chain is on the extracellular side. Asparagine 934 is a glycosylation site (N-linked (GlcNAc...) (complex) asparagine). The chain crosses the membrane as a helical span at residues 954–984 (WITIPLVCIYMLSTNILLVNLLVAMFGYTVG). Over 985-1104 (IVQENNDQVW…LLKEIANNIK (120 aa)) the chain is Cytoplasmic. The stretch at 1069 to 1104 (TKANDNSEEMRHRFRQLDSKLNDLKSLLKEIANNIK) forms a coiled coil.

It belongs to the transient receptor (TC 1.A.4) family. LTrpC subfamily. TRPM8 sub-subfamily. As to quaternary structure, homotetramer. Interacts (via N-terminus and C-terminus domains) with TCAF1; the interaction stimulates TRPM8 channel activity. Interacts (via N-terminus and C-terminus domains) with TCAF2; the interaction inhibits TRPM8 channel activity. N-glycosylation is not essential for but facilitates cell surface expression, multimerization, association with lipid rafts and ion channel activity. As to expression, expressed in dorsal root and trigeminal ganglia. Specifically expressed in a subset of pain- and temperature-sensing neurons. Not expressed in heavily myelinated neurons. Not expressed in neurons expressing TRPA1 or TRPV1.

It localises to the cell membrane. The protein localises to the membrane raft. It carries out the reaction Ca(2+)(in) = Ca(2+)(out). The enzyme catalyses Na(+)(in) = Na(+)(out). It catalyses the reaction K(+)(in) = K(+)(out). Activated by cold temperatures and by both natural and synthetic cooling compounds such as menthol and icilin. Activation of the channel requires the presence of PI(4,5)P2; PI(4,5)P2 is necessary to gate the channel. Activated by intracellular Ca(2+). Non-selective ion channel permeable to monovalent and divalent cations, including Na(+), K(+), and Ca(2+), with higher permeability for Ca(2+). Activated by multiple factors, such as temperature, voltage, pressure, and changes in osmolality. Activated by cool temperatures (&lt;23-28 degrees Celsius) and by chemical ligands evoking a sensation of coolness, such as menthol and icilin, therefore plays a central role in the detection of environmental cold temperatures. TRPM8 is a voltage-dependent channel; its activation by cold or chemical ligands shifts its voltage thresholds towards physiological membrane potentials, leading to the opening of the channel. In addition to its critical role in temperature sensing, regulates basal tear secretion by sensing evaporation-induced cooling and changes in osmolality. This chain is Transient receptor potential cation channel subfamily M member 8 (Trpm8), found in Mus musculus (Mouse).